We begin with the raw amino-acid sequence, 370 residues long: Pulmonary surfactant-associated protein B (370 aa).

Positions 1-24 (MAKSHLPPWLLLLLLPTLCGPGTA) are cleaved as a signal peptide. A propeptide spanning residues 25-184 (VWATSPLACA…PHTQDLSAQR (160 aa)) is cleaved from the precursor. One can recognise a Saposin A-type domain in the interval 26–66 (WATSPLACAQGPEFWCQSLEQALQCKALGHCLQEVWGHVGA). 3 Saposin B-type domains span residues 66 to 148 (ADDL…QPGS), 188 to 265 (PLPL…SSVD), and 284 to 359 (QDPE…VATL). Cystine bridges form between Cys70–Cys144, Cys73–Cys138, Cys101–Cys113, Cys192–Cys261, Cys195–Cys255, Cys219–Cys230, Cys288–Cys355, Cys291–Cys349, and Cys314–Cys324. A propeptide spanning residues 264–370 (VDSIGQVPPT…PLQCIQSPHF (107 aa)) is cleaved from the precursor. N-linked (GlcNAc...) asparagine glycosylation is present at Asn300.

As to quaternary structure, homodimer; disulfide-linked.

The protein localises to the secreted. The protein resides in the extracellular space. It is found in the surface film. Its function is as follows. Pulmonary surfactant-associated proteins promote alveolar stability by lowering the surface tension at the air-liquid interface in the peripheral air spaces. SP-B increases the collapse pressure of palmitic acid to nearly 70 millinewtons per meter. This Oryctolagus cuniculus (Rabbit) protein is Pulmonary surfactant-associated protein B (SFTPB).